A 372-amino-acid polypeptide reads, in one-letter code: Uroporphyrinogen decarboxylase (372 aa).

Substrate-binding positions include 35–39 (RQAGR), Asp-85, Tyr-166, Ser-221, and His-342.

The protein belongs to the uroporphyrinogen decarboxylase family. In terms of assembly, homodimer.

The protein resides in the cytoplasm. The catalysed reaction is uroporphyrinogen III + 4 H(+) = coproporphyrinogen III + 4 CO2. Its pathway is porphyrin-containing compound metabolism; protoporphyrin-IX biosynthesis; coproporphyrinogen-III from 5-aminolevulinate: step 4/4. Catalyzes the decarboxylation of four acetate groups of uroporphyrinogen-III to yield coproporphyrinogen-III. This chain is Uroporphyrinogen decarboxylase, found in Methylibium petroleiphilum (strain ATCC BAA-1232 / LMG 22953 / PM1).